Here is a 504-residue protein sequence, read N- to C-terminus: Tyrosine-protein phosphatase non-receptor type substrate 1 (504 aa).

A signal peptide spans methionine 1–glycine 30. Residues glutamate 31 to tyrosine 373 are Extracellular-facing. Residues glutamate 32–glycine 137 enclose the Ig-like V-type domain. 2 cysteine pairs are disulfide-bonded: cysteine 55–cysteine 121 and cysteine 170–cysteine 228. 2 consecutive Ig-like C1-type domains span residues proline 148 to serine 247 and proline 254 to lysine 348. N-linked (GlcNAc...) asparagine glycans are attached at residues asparagine 245, asparagine 270, asparagine 292, and asparagine 319. A disulfide bond links cysteine 273 and cysteine 331. The span at aspartate 336–glutamate 355 shows a compositional bias: basic and acidic residues. The disordered stretch occupies residues aspartate 336 to asparagine 364. Residues isoleucine 374–valine 394 form a helical membrane-spanning segment. At arginine 395 to lysine 504 the chain is on the cytoplasmic side. The disordered stretch occupies residues glutamine 402–lysine 504. Residues arginine 409–threonine 421 are compositionally biased toward basic and acidic residues. A Phosphotyrosine; by Tyr-kinases modification is found at tyrosine 429. An SH2-binding motif is present at residues tyrosine 429–leucine 432. The SH3-binding motif lies at lysine 439–alanine 444. A compositionally biased stretch (polar residues) spans glutamate 446–threonine 467. Phosphotyrosine; by Tyr-kinases occurs at positions 453 and 470. 3 short sequence motifs (SH2-binding) span residues tyrosine 453–isoleucine 456, tyrosine 470–leucine 473, and tyrosine 496–valine 499. Position 496 is a phosphotyrosine (tyrosine 496).

In terms of assembly, binds PTPN11 when tyrosine-phosphorylated, except in macrophages, where it primarily binds PTPN6. Binds GRB2 in vitro. Binds FGR. Binds JAK2 irrespective of its phosphorylation status and forms a stable complex. Binds SCAP1 and/or SCAP2. The resulting complex recruits FYB1. Binds PTK2B. Interacts with TRIM2. In terms of processing, N-glycosylated. Post-translationally, phosphorylated on tyrosine residues in response to stimulation with EGF, growth hormone, insulin and PDGF. Dephosphorylated by PTPN11. In terms of tissue distribution, ubiquitous. Highly expressed in brain. Detected on myeloid cells, but not T-cells. Detected at lower levels in heart, placenta, lung, testis, ovary, colon, liver, small intestine, prostate, spleen, kidney, skeletal muscle and pancreas.

Its subcellular location is the membrane. Its function is as follows. Immunoglobulin-like cell surface receptor for CD47. Acts as docking protein and induces translocation of PTPN6, PTPN11 and other binding partners from the cytosol to the plasma membrane. Supports adhesion of cerebellar neurons, neurite outgrowth and glial cell attachment. May play a key role in intracellular signaling during synaptogenesis and in synaptic function. Involved in the negative regulation of receptor tyrosine kinase-coupled cellular responses induced by cell adhesion, growth factors or insulin. Mediates negative regulation of phagocytosis, mast cell activation and dendritic cell activation. CD47 binding prevents maturation of immature dendritic cells and inhibits cytokine production by mature dendritic cells. Plays a role in antiviral immunity and limits new world arenavirus infection by decreasing virus internalization. Receptor for THBS1. Interaction with THBS1 stimulates phosphorylation of SIRPA. In response to THBS1, involved in ROS signaling in non-phagocytic cells, stimulating NADPH oxidase-derived ROS production. The chain is Tyrosine-protein phosphatase non-receptor type substrate 1 (SIRPA) from Homo sapiens (Human).